We begin with the raw amino-acid sequence, 160 residues long: Thebaine synthase 2 (160 aa).

Thebaine is bound at residue Ser-74. The Proton acceptor role is filled by His-89. Position 105 (Thr-105) interacts with thebaine.

Belongs to the MLP family. Homodimer (allosteric) and oligomers. Expressed in poppy latex.

It carries out the reaction (7S)-O-acetylsalutaridinol = thebaine + acetate + H(+). The protein operates within alkaloid biosynthesis; morphine biosynthesis. With respect to regulation, slightly inhibited by salutaridine and (7S)-salutaridinol. In terms of biological role, catalyzes the formation of thebaine from (7S)-salutaridinol 7-O-acetate at the expense of labile hydroxylated by-products, which are preferentially produced by spontaneous allylic elimination. No visible activity toward (7S)-salutaridinol (at pH 7). The chain is Thebaine synthase 2 from Papaver somniferum (Opium poppy).